The primary structure comprises 341 residues: Phosphate acyltransferase (341 aa).

The protein belongs to the PlsX family. Homodimer. Probably interacts with PlsY.

Its subcellular location is the cytoplasm. It carries out the reaction a fatty acyl-[ACP] + phosphate = an acyl phosphate + holo-[ACP]. The protein operates within lipid metabolism; phospholipid metabolism. Catalyzes the reversible formation of acyl-phosphate (acyl-PO(4)) from acyl-[acyl-carrier-protein] (acyl-ACP). This enzyme utilizes acyl-ACP as fatty acyl donor, but not acyl-CoA. The chain is Phosphate acyltransferase from Vibrio parahaemolyticus serotype O3:K6 (strain RIMD 2210633).